Consider the following 1571-residue polypeptide: MAEPTKISILGRESIVAEYGIWGTYIVQDLLTNLPSTTYVLVTDTNLGSIYREKFAKVFNEAAAALSPAPRLLTKEIPPGENSKSRQGKADIEDWMLQQTCGRDTVIIALGGGVIGDLLGFVASTYMRGIRFVQVPTTLLAMVDSSIGGKTAIDTPLGKNLIGAIWQPHRIYIDIDFIDTLPEREFINGMAEVIKTAAISDEKEFAALEQHADAILKAARSKAGKGRFDSVRQVLKDRIVASARHKAYVVTADEREGGLRNLLNLGHSIGHAIEAILSPQVLHGECVAIGMVKELELARYLGILKPIAVSRMVKCLSKYGLPTSLKDARVRKHTAGKHCSLEQLMANMALDKKNDGPKKKVVLLSAIGKTYEPKASVVSNEDIRVVLAPSIEVIPGVPKNLNVVCAPPGSKSISNRALVLAALGSGTVRVKNLLHSDDTEVMLNALERLGAATFAWEDEGEVLVVNGNGGKMQASPTELYLGNAGTASRFLTSVATLSGKGSVDYNILTGNNRMKQRPIGDLVDALTVNGAQVEYLEKAGSLPLKIAASGGFKGGRINLAAKVSSQYVSSLLMCAPYAKEPVTLKLVGGKPISLSYIEMTTAMMRSFGIDVQKSTTEEWTYHIPQGSYTNPPEYVIESDASSATYPLAIAAVTGTTCTVPNIGSASLQGDARFAVEVLRPMGCNVEQTATSTTVTGPADGVLRPLPNVDMEPMTDAFLGASVLAAIAQGKGGNNTTRIYGIANQRVKECNRIEAMRVELAKFGVVCREHPDGLEIDGINRSSLRHPAGGVFCYDDHRVAFSFSILSLVAPTSTLILEKECVGKTWPTYWDALKQKFGVQLEGKELAESEVTHGSADRSNASIIIIGMRGAGKTTTGRWAAKALNRKFIDLDVELEQTEGKTIPDLIKERGWQGFRDAELSLFKRALAERPTGHVFACGGGIVEIAEARKILVDYHKNKGNVLLVMRDIKKVMEFLNIDKTRPAYIEDMMSVWLRRQPWYQECSNVQYYSRHSSSPELALAMDDFGRFIQFVSGQTDYLAAIRKKHLSFFVSLTLPDLRESGDLLRTVASGSDAVELRVDLLKDPSSDSVIPSAEYVAEQISFYRSRVSLPIVFTIRTVSQGGKFPDDAHDAALELIMLAIRSGCEFIDLEITFPEDLLRKVTESKAHAKIIASHHDPRGKLNWANGSWIQYYNKALQYGDIIKLVGVAETLKDNTSLKDFKDWAEQAHPDVPVIAINMGDKGQLSRMLNGFLTPVSHPALPFKAAPGQLSAAEIRRGLSIMGEIPAKKFAVLGKPVSASRSPPMHNTLFEQNGLPHVYTRLETDKAQDVKEFIRSPDFGGASVTIPLKLDIIPLIDEILNEAEIIGAVNTIIPVEGKDGSTRLVGRNTDWSGIVRCLREAGAHSNEGKSSALVIGGGGTARAAIYALHHMGFSTIYVLGRSPEKIQNMASTFPTGFDIRVLEHANDVESIPRVAVGTIPGDKPIESNIREILCTIFQRSGSAGDESGVLLEMAYKPSVTPLIQLASDYGWTTIPGLEALVGQGVYQFEYWTGITPVYEVARNAVLGTNETK.

The 3-dehydroquinate synthase stretch occupies residues 1–380; it reads MAEPTKISIL…YEPKASVVSN (380 aa). NAD(+)-binding positions include 44-46, 81-84, 112-114, and D117; these read DTN, ENSK, and GGV. 7-phospho-2-dehydro-3-deoxy-D-arabino-heptonate is bound at residue R128. 137 to 138 contributes to the NAD(+) binding site; sequence TT. Positions 144 and 150 each coordinate 7-phospho-2-dehydro-3-deoxy-D-arabino-heptonate. Residue K159 participates in NAD(+) binding. Residue N160 participates in 7-phospho-2-dehydro-3-deoxy-D-arabino-heptonate binding. Residues 177 to 180 and N188 each bind NAD(+); that span reads FIDT. E192 provides a ligand contact to Zn(2+). 7-phospho-2-dehydro-3-deoxy-D-arabino-heptonate contacts are provided by residues 192-195 and K246; that span reads EVIK. Catalysis depends on E256, which acts as the Proton acceptor; for 3-dehydroquinate synthase activity. Residues 260 to 264 and H267 each bind 7-phospho-2-dehydro-3-deoxy-D-arabino-heptonate; that span reads RNLLN. Zn(2+) is bound at residue H267. The Proton acceptor; for 3-dehydroquinate synthase activity role is filled by H271. Residues H283 and K352 each contribute to the 7-phospho-2-dehydro-3-deoxy-D-arabino-heptonate site. H283 contributes to the Zn(2+) binding site. The EPSP synthase stretch occupies residues 393–838; the sequence is VIPGVPKNLN…WDALKQKFGV (446 aa). C820 (for EPSP synthase activity) is an active-site residue. The segment at 859 to 1051 is shikimate kinase; that stretch reads NASIIIIGMR…RKKHLSFFVS (193 aa). Position 866–873 (866–873) interacts with ATP; it reads GMRGAGKT. A 3-dehydroquinase region spans residues 1052–1273; the sequence is LTLPDLRESG…AAPGQLSAAE (222 aa). The active-site Proton acceptor; for 3-dehydroquinate dehydratase activity is the H1175. K1203 functions as the Schiff-base intermediate with substrate; for 3-dehydroquinate dehydratase activity in the catalytic mechanism. Residues 1286–1571 are shikimate dehydrogenase; that stretch reads AKKFAVLGKP…NAVLGTNETK (286 aa).

This sequence in the N-terminal section; belongs to the sugar phosphate cyclases superfamily. Dehydroquinate synthase family. In the 2nd section; belongs to the EPSP synthase family. It in the 3rd section; belongs to the shikimate kinase family. The protein in the 4th section; belongs to the type-I 3-dehydroquinase family. This sequence in the C-terminal section; belongs to the shikimate dehydrogenase family. In terms of assembly, homodimer. It depends on Zn(2+) as a cofactor.

The protein localises to the cytoplasm. The catalysed reaction is 7-phospho-2-dehydro-3-deoxy-D-arabino-heptonate = 3-dehydroquinate + phosphate. It carries out the reaction 3-dehydroquinate = 3-dehydroshikimate + H2O. The enzyme catalyses shikimate + NADP(+) = 3-dehydroshikimate + NADPH + H(+). It catalyses the reaction shikimate + ATP = 3-phosphoshikimate + ADP + H(+). The catalysed reaction is 3-phosphoshikimate + phosphoenolpyruvate = 5-O-(1-carboxyvinyl)-3-phosphoshikimate + phosphate. It participates in metabolic intermediate biosynthesis; chorismate biosynthesis; chorismate from D-erythrose 4-phosphate and phosphoenolpyruvate: step 2/7. The protein operates within metabolic intermediate biosynthesis; chorismate biosynthesis; chorismate from D-erythrose 4-phosphate and phosphoenolpyruvate: step 3/7. It functions in the pathway metabolic intermediate biosynthesis; chorismate biosynthesis; chorismate from D-erythrose 4-phosphate and phosphoenolpyruvate: step 4/7. Its pathway is metabolic intermediate biosynthesis; chorismate biosynthesis; chorismate from D-erythrose 4-phosphate and phosphoenolpyruvate: step 5/7. It participates in metabolic intermediate biosynthesis; chorismate biosynthesis; chorismate from D-erythrose 4-phosphate and phosphoenolpyruvate: step 6/7. Functionally, the AROM polypeptide catalyzes 5 consecutive enzymatic reactions in prechorismate polyaromatic amino acid biosynthesis. The polypeptide is Pentafunctional AROM polypeptide 2 (Talaromyces marneffei (strain ATCC 18224 / CBS 334.59 / QM 7333) (Penicillium marneffei)).